The following is a 192-amino-acid chain: Na(+)-translocating ferredoxin:NAD(+) oxidoreductase complex subunit A (192 aa).

6 helical membrane-spanning segments follow: residues 4 to 24, 38 to 58, 71 to 91, 101 to 121, 133 to 153, and 169 to 189; these read IFIM…FLGI, VGMG…TYVV, LQTI…EMII, ALGV…VALI, IFNG…FAGI, and FPIA…FSGM.

This sequence belongs to the NqrDE/RnfAE family. As to quaternary structure, the complex is composed of six subunits: RnfA, RnfB, RnfC, RnfD, RnfE and RnfG.

The protein localises to the cell membrane. The catalysed reaction is 2 reduced [2Fe-2S]-[ferredoxin] + Na(+)(in) + NAD(+) + H(+) = 2 oxidized [2Fe-2S]-[ferredoxin] + Na(+)(out) + NADH. Part of a membrane-bound complex that couples electron transfer with translocation of ions across the membrane. Couples electron transfer from reduced ferredoxin to NAD(+) with electrogenic movement of Na(+) out of the cell. Involved in caffeate respiration. This chain is Na(+)-translocating ferredoxin:NAD(+) oxidoreductase complex subunit A, found in Acetobacterium woodii (strain ATCC 29683 / DSM 1030 / JCM 2381 / KCTC 1655 / WB1).